A 179-amino-acid polypeptide reads, in one-letter code: SAEVAGAIIDGASLTFDVLQTVLKALGDVSRKIAVGIDNEPGMTWTAMNTYFRSGTSDVILPHTVPHSKALLYDGQKNRGPVTTGVVGVIAYAMSDGNTLAVLFSIPFDYNLYSNWWNVKVYKGHRRADQAMYEELYYDFSPFRGDNGWHTKSIGYGLKGRGFMNSSGKAILQIHVNKV.

The interval Ser1–Val29 is N-terminal alpha-helix that contributes to the pore. Positions Gly11 to Ser30 are N-terminal region. Arg31 is an an N-(acyl)-sphingosylphosphocholine binding site. Residues Tyr51 and Arg53 each coordinate N-acetyl-D-glucosamine 6-sulfate. An N-(acyl)-sphingosylphosphocholine is bound by residues Arg53, Ser54, Arg79, Gly85, Tyr113, Ser114, Trp116, Tyr133, Tyr137, Tyr138, Arg144, and Gly168. The trp-rich region, which is important for the binding to lipid membrane stretch occupies residues Ser105 to Lys120. Tyr138 is an N-acetyl-D-glucosamine 6-sulfate binding site. Positions Arg144–Asp146 match the Cell attachment site, crucial for protein stability motif.

The protein belongs to the actinoporin family. Sea anemone subfamily. Octamer or nonamer in membranes. Monomer in the soluble state.

Its subcellular location is the secreted. The protein resides in the nematocyst. It is found in the target cell membrane. In terms of biological role, pore-forming toxin (PFT) that consists of a crown-shaped octamer or nonamer that forms cation-selective hydrophilic pores of about 1.5 nm (inside) and 13 nm (outside) and causes cytolysis. It causes cardiac stimulation. Also causes hemolysis (HC(50)=0.3 nM). Interestingly, the Phe-16 is crucial for hemolysis. Pore formation is a multi-step process that involves specific recognition of membrane sphingomyelin (but neither cholesterol nor phosphatidylcholine) using aromatic rich region and adjacent phosphocholine (POC) binding site, firm binding to the membrane (mainly driven by hydrophobic interactions) accompanied by the transfer of the N-terminal region to the lipid-water interface and finally pore formation after oligomerization of monomers. It is probable that a dimeric form is an assembly intermediate before the complete oligomerization. The formation of stable pores occurs only in vesicles composed of DOPC/SM (there is no oligomerization when the PFT is treated with vesicles of DOPC or SM alone). The transmembrane pore displays 8 lateral perforations, one at each subunit-subunit interface, partially occupied by the acyl-chain region of a bridging lipid. Each pore contains 24 lipid molecules, firmly bound to each subunit, that is, 3 lipids (L1, L2, L3, L4 and/or L5) are associated to each subunit. Lipid L1 bridges 2 subunits, whereas lipids L2 and L3 bind to sites at single subunit. This chain is DELTA-actitoxin-Afr1c, found in Actinia fragacea (Strawberry anemone).